A 784-amino-acid chain; its full sequence is Cadherin-5 (784 aa).

The first 25 residues, 1 to 25, serve as a signal peptide directing secretion; it reads MQRLMMLLATSGACLGLLAVAAVAA. The propeptide occupies 26 to 47; sequence AGANPAQRDTHSLLPTHRRQKR. Cadherin domains follow at residues 48–151, 152–258, 259–372, 373–477, and 478–593; these read DWIW…WPVF, THRL…FPFF, TQTK…PPIF, QQPF…DNAP, and EFAK…MAAQ. The Extracellular segment spans residues 48-599; it reads DWIWNQMHID…MAAQVGVSIQ (552 aa). Ca(2+) contacts are provided by Glu58 and Glu59. Asn61 carries N-linked (GlcNAc...) (complex) asparagine glycosylation. 2 residues coordinate Ca(2+): Asp109 and Glu111. Asn112 is a glycosylation site (N-linked (GlcNAc...) (complex) asparagine). Asp143, Val144, Asn145, Asp146, and Asn147 together coordinate Ca(2+). Residue Asn157 is glycosylated (N-linked (GlcNAc...) asparagine). Residues Asp177, Asp179, His186, and Asp231 each contribute to the Ca(2+) site. Asn362 carries N-linked (GlcNAc...) asparagine glycosylation. Asn442 carries N-linked (GlcNAc...) (complex) asparagine glycosylation. Asn523 and Asn535 each carry an N-linked (GlcNAc...) asparagine glycan. The chain crosses the membrane as a helical span at residues 600-620; that stretch reads AVVAILLCILTITVITLLIFL. The tract at residues 621–660 is required for interaction with PALS1; the sequence is RRRLRKQARAHGKSVPEIHEQLVTYDEEGGGEMDTTSYDV. At 621 to 784 the chain is on the cytoplasmic side; that stretch reads RRRLRKQARA…GSDPREELLY (164 aa).

Part of a complex composed of AMOTL2, MAGI1 and CDH5, within the complex AMOTL2 acts as a scaffold protein for the interaction of MAGI1 with CDH5. The complex is required for coupling actin fibers to cell junctions in endothelial cells. Within the complex AMOTL2 (via its N-terminus) interacts with CDH5. Interacts (via cadherin 5 domain) with PTPRB. Interacts with TRPC4. Interacts with KRIT1. Interacts with PARD3. Interacts with RTN4 (isoform B). Interacts with PALS1; the interaction promotes PALS1 localization to cell junctions and is required for CDH5-mediated vascular lumen formation and endothelial cell. Interacts with CTNND1/p120-catenin; the interaction controls CADH5 endocytosis. Phosphorylated on tyrosine residues by KDR/VEGFR-2. Dephosphorylated by PTPRB. Post-translationally, O-glycosylated. In terms of tissue distribution, expressed in endothelial cells (at protein level). Expressed in the brain.

The protein resides in the cell junction. The protein localises to the adherens junction. It is found in the cell membrane. It localises to the cytoplasm. Its function is as follows. Cadherins are calcium-dependent cell adhesion proteins. They preferentially interact with themselves in a homophilic manner in connecting cells; cadherins may thus contribute to the sorting of heterogeneous cell types. This cadherin may play a important role in endothelial cell biology through control of the cohesion and organization of the intercellular junctions. It associates with alpha-catenin forming a link to the cytoskeleton. Plays a role in coupling actin fibers to cell junctions in endothelial cells, via acting as a cell junctional complex anchor for AMOTL2 and MAGI1. Acts in concert with KRIT1 and PALS1 to establish and maintain correct endothelial cell polarity and vascular lumen. These effects are mediated by recruitment and activation of the Par polarity complex and RAP1B. Required for activation of PRKCZ and for the localization of phosphorylated PRKCZ, PARD3, TIAM1 and RAP1B to the cell junction. Associates with CTNND1/p120-catenin to control CADH5 endocytosis. This chain is Cadherin-5, found in Homo sapiens (Human).